The following is a 204-amino-acid chain: Recombination protein RecR (204 aa).

The segment at 63–78 (CRICFNVADSELCPIC) adopts a C4-type zinc-finger fold. The 96-residue stretch at 86-181 (NKICVVEQPQ…KVTRLARGLP (96 aa)) folds into the Toprim domain.

It belongs to the RecR family.

Functionally, may play a role in DNA repair. It seems to be involved in an RecBC-independent recombinational process of DNA repair. It may act with RecF and RecO. The polypeptide is Recombination protein RecR (Dehalococcoides mccartyi (strain ATCC BAA-2266 / KCTC 15142 / 195) (Dehalococcoides ethenogenes (strain 195))).